Reading from the N-terminus, the 158-residue chain is Large ribosomal subunit protein uL11 (158 aa).

Positions 1–28 are disordered; sequence MAGTIEALVPGGQATPGPPLGPELGPTP.

The protein belongs to the universal ribosomal protein uL11 family. In terms of assembly, part of the ribosomal stalk of the 50S ribosomal subunit. Interacts with L10 and the large rRNA to form the base of the stalk. L10 forms an elongated spine to which L12 dimers bind in a sequential fashion forming a multimeric L10(L12)X complex.

In terms of biological role, forms part of the ribosomal stalk which helps the ribosome interact with GTP-bound translation factors. The chain is Large ribosomal subunit protein uL11 from Halorubrum lacusprofundi (strain ATCC 49239 / DSM 5036 / JCM 8891 / ACAM 34).